The sequence spans 424 residues: Protein CLP1 homolog (424 aa).

ATP-binding positions include glutamate 19, lysine 60, and 122-127 (DVGKST).

Belongs to the Clp1 family. Clp1 subfamily.

It localises to the nucleus. Required for endonucleolytic cleavage during polyadenylation-dependent pre-mRNA 3'-end formation. In Aedes aegypti (Yellowfever mosquito), this protein is Protein CLP1 homolog (cbc).